We begin with the raw amino-acid sequence, 189 residues long: Interferon alpha-1/13 (189 aa).

A signal peptide spans 1–23 (MASPFALLMVLVVLSCKSSCSLG). 2 disulfide bridges follow: cysteine 24–cysteine 122 and cysteine 52–cysteine 162.

This sequence belongs to the alpha/beta interferon family. As to quaternary structure, interacts with CR2.

It is found in the secreted. In terms of biological role, produced by macrophages, IFN-alpha have antiviral activities. Interferon stimulates the production of two enzymes: a protein kinase and an oligoadenylate synthetase. The protein is Interferon alpha-1/13 (IFNA1) of Homo sapiens (Human).